A 248-amino-acid polypeptide reads, in one-letter code: uncharacterized protein (248 aa).

A signal peptide spans 1–23; it reads MLKKIVIGVTATAAFGIGAGALA.

It is found in the cell outer membrane. This is an uncharacterized protein from Coxiella burnetii (strain RSA 493 / Nine Mile phase I).